A 702-amino-acid chain; its full sequence is Exodeoxyribonuclease 1 (702 aa).

The segment at Met-1–Arg-96 is N-domain. Mg(2+) contacts are provided by Asp-30, Asp-78, Glu-150, Asp-152, Asp-171, Asp-173, and Asp-227. The interval Asn-114–Phe-247 is I-domain. Ser-372 is modified (phosphoserine). Disordered stretches follow at residues Ser-465 to Ser-571 and Ser-660 to Arg-685. Over residues Asn-474 to Thr-498 the composition is skewed to polar residues. Acidic residues-rich tracts occupy residues Leu-500–Glu-518 and Asn-535–Glu-550. Residues Thr-558–Ser-571 are compositionally biased toward low complexity. Basic and acidic residues predominate over residues Leu-667–Thr-678.

It belongs to the XPG/RAD2 endonuclease family. EXO1 subfamily. In terms of assembly, interacts with mismatch repair protein MSH2. Requires Mg(2+) as cofactor.

It localises to the nucleus. Inactivated by calcium and zinc ions. Functionally, 5'-&gt;3' double-stranded DNA exonuclease involved in mismatch repair and eventually also in mitotic recombination between direct repeats. Also has a minor role in the correction of large DNA mismatches that occur in the heteroduplex DNA during meiotic recombination at the HIS4 locus. The protein is Exodeoxyribonuclease 1 (EXO1) of Saccharomyces cerevisiae (strain ATCC 204508 / S288c) (Baker's yeast).